The sequence spans 160 residues: Cyclic pyranopterin monophosphate synthase (160 aa).

Substrate-binding positions include 74 to 76 and 112 to 113; these read LSH and ME. Aspartate 127 is an active-site residue.

This sequence belongs to the MoaC family. As to quaternary structure, homohexamer; trimer of dimers.

It carries out the reaction (8S)-3',8-cyclo-7,8-dihydroguanosine 5'-triphosphate = cyclic pyranopterin phosphate + diphosphate. Its pathway is cofactor biosynthesis; molybdopterin biosynthesis. Catalyzes the conversion of (8S)-3',8-cyclo-7,8-dihydroguanosine 5'-triphosphate to cyclic pyranopterin monophosphate (cPMP). The chain is Cyclic pyranopterin monophosphate synthase from Pelobacter propionicus (strain DSM 2379 / NBRC 103807 / OttBd1).